We begin with the raw amino-acid sequence, 143 residues long: Transthyretin-like protein 33 (143 aa).

The first 20 residues, 1-20, serve as a signal peptide directing secretion; it reads MSRLACISSLFILCAIGSEA.

It belongs to the nematode transthyretin-like family. Expressed in head cells next to and anterior of the first pharyngeal bulb, the pharynx, and the hypodermis.

It localises to the secreted. In terms of biological role, protects dopaminergic neurons from degeneration caused by oxidative stress. The protein is Transthyretin-like protein 33 of Caenorhabditis elegans.